A 73-amino-acid chain; its full sequence is UPF0270 protein SG2298 (73 aa).

It belongs to the UPF0270 family.

This Sodalis glossinidius (strain morsitans) protein is UPF0270 protein SG2298.